The following is a 622-amino-acid chain: Elongation factor 4 (622 aa).

The tr-type G domain occupies 17-201 (ALIRNFCIIA…KVVAEVPAPV (185 aa)). GTP is bound by residues 29–34 (DHGKST) and 148–151 (NKID).

It belongs to the TRAFAC class translation factor GTPase superfamily. Classic translation factor GTPase family. LepA subfamily.

Its subcellular location is the cell membrane. The catalysed reaction is GTP + H2O = GDP + phosphate + H(+). Required for accurate and efficient protein synthesis under certain stress conditions. May act as a fidelity factor of the translation reaction, by catalyzing a one-codon backward translocation of tRNAs on improperly translocated ribosomes. Back-translocation proceeds from a post-translocation (POST) complex to a pre-translocation (PRE) complex, thus giving elongation factor G a second chance to translocate the tRNAs correctly. Binds to ribosomes in a GTP-dependent manner. This Streptomyces avermitilis (strain ATCC 31267 / DSM 46492 / JCM 5070 / NBRC 14893 / NCIMB 12804 / NRRL 8165 / MA-4680) protein is Elongation factor 4.